The following is a 93-amino-acid chain: Cell division protein FtsB (93 aa).

The Cytoplasmic segment spans residues 1 to 3 (MRL). The helical transmembrane segment at 4-21 (FILVLTLLFGWLQYTLWF) threads the bilayer. The Periplasmic segment spans residues 22–93 (GKNGVSDYYT…FYRIVGEENQ (72 aa)). Residues 42–75 (VNTKLQARNSEMYAEIDDLKQGLDAIEERARHEL) are a coiled coil.

It belongs to the FtsB family. In terms of assembly, part of a complex composed of FtsB, FtsL and FtsQ.

It is found in the cell inner membrane. Essential cell division protein. May link together the upstream cell division proteins, which are predominantly cytoplasmic, with the downstream cell division proteins, which are predominantly periplasmic. The polypeptide is Cell division protein FtsB (Vibrio vulnificus (strain YJ016)).